The primary structure comprises 286 residues: F-box/SPRY domain-containing protein 1 (286 aa).

Position 2 is an N-acetylalanine (A2). The 50-residue stretch at 33-82 (SGVGGRLPSRVLELVFSYLELSELRSCALVCKHWYRCLHGDENSEVWRSL) folds into the F-box domain. In terms of domain architecture, B30.2/SPRY spans 92–284 (LRTDILCNLP…VTLVYLGKPL (193 aa)).

Belongs to the FBXO45/Fsn family. In terms of assembly, forms a complex with MYCBP2 and SKP1. Interacts with HEY1; leading to FBXO45 nuclear translocation. Interacts (via SPRY domain) with CDH2. Expressed speciffically in the central nervous system, including cerebellum, medulla oblongata, olfactory bulb, hippocampus, cortex and brain stem.

It localises to the secreted. It is found in the postsynaptic cell membrane. Its subcellular location is the presynaptic cell membrane. The protein resides in the nucleus. The protein operates within protein modification; protein ubiquitination. In terms of biological role, component of E3 ubiquitin ligase complex consisting of FBXO45, MYCBP2 and SKP1. Functions in substrate recognition but plays also an important role in assembly of the complex. Required for normal neuromuscular synaptogenesis, axon pathfinding and neuronal migration. Regulates neuron migration during brain development through interaction with N-cadherin/CDH2 after secretion via a non-classical mechanism. Plays a role in the regulation of neurotransmission at mature neurons. May control synaptic activity by controlling UNC13A via ubiquitin dependent pathway. Specifically recognizes TP73, promoting its ubiquitination and degradation. Polyubiquitinates NMNAT2, an adenylyltransferase that acts as an axon maintenance factor, and regulates its stability and degradation by the proteasome. Acts also by ubiquitinating FBXW7 during prolonged mitotic arrest and promotes FBXW7 proteasomal degradation. Induces subsequently an increase in mitotic slippage and prevents mitotic cell death. In response to influenza infection, mediates interferon-lambda receptor IFNLR1 polyubiquitination and degradation through the ubiquitin-proteasome system by docking with its intracellular receptor domain. This Mus musculus (Mouse) protein is F-box/SPRY domain-containing protein 1.